Here is a 376-residue protein sequence, read N- to C-terminus: uncharacterized protein (376 aa).

The first 31 residues, 1–31 (MSRHKVYKAISSYVIIAIIIIAIVAVVGVLL), serve as a signal peptide directing secretion. The tract at residues 37–57 (SSSSVTSTTTPTTSSSVSPSS) is disordered.

Belongs to the bacterial solute-binding protein 1 family. WtpA subfamily.

This is an uncharacterized protein from Sulfurisphaera tokodaii (strain DSM 16993 / JCM 10545 / NBRC 100140 / 7) (Sulfolobus tokodaii).